We begin with the raw amino-acid sequence, 890 residues long: Alanine--tRNA ligase (890 aa).

Zn(2+) is bound by residues H568, H572, C680, and H684.

It belongs to the class-II aminoacyl-tRNA synthetase family. Zn(2+) is required as a cofactor.

It is found in the cytoplasm. The catalysed reaction is tRNA(Ala) + L-alanine + ATP = L-alanyl-tRNA(Ala) + AMP + diphosphate. In terms of biological role, catalyzes the attachment of alanine to tRNA(Ala) in a two-step reaction: alanine is first activated by ATP to form Ala-AMP and then transferred to the acceptor end of tRNA(Ala). Also edits incorrectly charged Ser-tRNA(Ala) and Gly-tRNA(Ala) via its editing domain. This Psychrobacter arcticus (strain DSM 17307 / VKM B-2377 / 273-4) protein is Alanine--tRNA ligase.